Reading from the N-terminus, the 200-residue chain is Probable GTP-binding protein EngB (200 aa).

The EngB-type G domain occupies 26–200; sequence SIPEIAIAGR…IYEIAQCIKK (175 aa). GTP contacts are provided by residues 34–41, 61–65, 80–83, 147–150, and 179–181; these read GRSNVGKS, GCTKQ, DLPG, TKID, and TSS. The Mg(2+) site is built by Ser41 and Thr63.

It belongs to the TRAFAC class TrmE-Era-EngA-EngB-Septin-like GTPase superfamily. EngB GTPase family. It depends on Mg(2+) as a cofactor.

Functionally, necessary for normal cell division and for the maintenance of normal septation. This Ehrlichia chaffeensis (strain ATCC CRL-10679 / Arkansas) protein is Probable GTP-binding protein EngB.